We begin with the raw amino-acid sequence, 383 residues long: MAKRIKKTEEITKKFGDERKKALDDALKNIEKDFGKGAVMRLGERAEQKVQVMSSGSLALDIALGAGGYPKGRIVEIYGPESSGKTTVALHAVAQAQKDGGIAAFIDAEHALDPAYAAALGVNIDELLLSQPDSGEQGLEIAGKLIDSGAVDLVVVDSVAALVPRAEIDGDIGDSHVGLQARMMSQAMRKLSASINKTKTIAIFINQLREKVGIMFGNPETTPGGRALKFYSSVRLDVRGNTQIKGTGEQKDSNIGKETKIKVVKNKVAPPFKEAFVEIIYGEGISRTGELVKIASDLGIIQKAGAWYSYNGEKIGQGSENAKKFLADNPEIFDDIDHKVRVQYGLIEEDNTEEKQSSKEKETDEKADKNLVLELDDTIELED.

79–86 (GPESSGKT) serves as a coordination point for ATP. The interval 347-369 (IEEDNTEEKQSSKEKETDEKADK) is disordered. A compositionally biased stretch (basic and acidic residues) spans 353 to 369 (EEKQSSKEKETDEKADK).

The protein belongs to the RecA family.

The protein resides in the cytoplasm. Functionally, can catalyze the hydrolysis of ATP in the presence of single-stranded DNA, the ATP-dependent uptake of single-stranded DNA by duplex DNA, and the ATP-dependent hybridization of homologous single-stranded DNAs. It interacts with LexA causing its activation and leading to its autocatalytic cleavage. This chain is Protein RecA, found in Streptococcus mutans serotype c (strain ATCC 700610 / UA159).